Reading from the N-terminus, the 299-residue chain is uncharacterized protein (299 aa).

The interval 1–38 is disordered; the sequence is MSLDSNSDTEFELVPKFQTQPTRGDAPKSPELEEVSTV.

This sequence belongs to the calycin superfamily. Fatty-acid binding protein (FABP) family.

This is an uncharacterized protein from Caenorhabditis elegans.